Consider the following 655-residue polypeptide: Protein movement modulator (655 aa).

Over 1-54 (MEQPSILVKILHSIPHVNYTFRRVNDTFNPDSDVYLEPTNNKLQCQQKGIELQS) the chain is Extracellular. Asn18 and Asn25 each carry an N-linked (GlcNAc...) asparagine glycan. The helical transmembrane segment at 55 to 75 (LVILASIPAGLLIGSLLGLLL) threads the bilayer. Over 76-95 (YLLTRCCDRRQRKPSAQRCQ) the chain is Cytoplasmic. A helical membrane pass occupies residues 96 to 116 (SCSLVIITLMTCAAIGLGLYG). Residues 117-231 (NDDFHNGLLQ…GEFYESIRWP (115 aa)) lie on the Extracellular side of the membrane. Asn171, Asn188, and Asn211 each carry an N-linked (GlcNAc...) asparagine glycan. A helical transmembrane segment spans residues 232–252 (ATLAFLTVLLLLCTVLVIGVA). At 253 to 258 (RRSRCT) the chain is on the cytoplasmic side. Residues 259-279 (LIFFSVSGLFCIIICWLLAGV) form a helical membrane-spanning segment. At 280–401 (YLASSVAAGD…ALRGLCGGGL (122 aa)) the chain is on the extracellular side. N-linked (GlcNAc...) asparagine glycans are attached at residues Asn326 and Asn372. Residues 402–422 (LGLSLMMVAGLLTSFLLTILV) form a helical membrane-spanning segment. The Cytoplasmic portion of the chain corresponds to 423–655 (YADSHAWIYL…CKTLESNDFY (233 aa)). The segment at 446–576 (APLFPASNAP…NNHYNNTQHR (131 aa)) is disordered. The span at 450–464 (PASNAPSASISPTAP) shows a compositional bias: low complexity. The segment covering 465–480 (LSTGTINRTLLHHQQA) has biased composition (polar residues). Residues 482 to 509 (SGGGSGTLPGSGGGAGAGGGVGANGHNG) are compositionally biased toward gly residues. Low complexity-rich tracts occupy residues 526-539 (SPSSQSSHTSSTAT) and 546-576 (SYHNSHQQHNNHLYSNHYSHSNNHYNNTQHR). A phosphoserine mark is found at Ser597 and Ser599.

It belongs to the tweety family.

It localises to the cell membrane. The catalysed reaction is chloride(in) = chloride(out). In terms of biological role, probable large-conductance Ca(2+)-activated chloride channel. Modulator of embryonic movement. This Drosophila melanogaster (Fruit fly) protein is Protein movement modulator.